A 367-amino-acid chain; its full sequence is Glutamate 5-kinase (367 aa).

Lys10 contacts ATP. Substrate contacts are provided by Ser50, Asp137, and Asn149. ATP-binding positions include Thr169–Asp170 and Thr211–Lys217. Positions Ala275–Glu353 constitute a PUA domain.

This sequence belongs to the glutamate 5-kinase family.

Its subcellular location is the cytoplasm. It catalyses the reaction L-glutamate + ATP = L-glutamyl 5-phosphate + ADP. Its pathway is amino-acid biosynthesis; L-proline biosynthesis; L-glutamate 5-semialdehyde from L-glutamate: step 1/2. Catalyzes the transfer of a phosphate group to glutamate to form L-glutamate 5-phosphate. In Sodalis glossinidius (strain morsitans), this protein is Glutamate 5-kinase.